A 473-amino-acid polypeptide reads, in one-letter code: Mannose-1-phosphate guanylyltransferase (473 aa).

This sequence belongs to the mannose-6-phosphate isomerase type 2 family. Homodimer.

It carries out the reaction alpha-D-mannose 1-phosphate + GTP + H(+) = GDP-alpha-D-mannose + diphosphate. Its pathway is nucleotide-sugar biosynthesis; GDP-alpha-D-mannose biosynthesis; GDP-alpha-D-mannose from alpha-D-mannose 1-phosphate (GTP route): step 1/1. It participates in bacterial outer membrane biogenesis; LPS O-antigen biosynthesis. Functionally, involved in GDP-mannose biosynthesis which serves as the activated sugar nucleotide precursor for mannose residues in cell surface polysaccharides. This enzyme participates in synthesis of the LPS group C2 O antigen. This is Mannose-1-phosphate guanylyltransferase (rfbM) from Salmonella muenchen.